Here is a 350-residue protein sequence, read N- to C-terminus: Transcriptional activator hacA (350 aa).

Residues methionine 1–glutamate 118 form a disordered region. The segment covering proline 35–alanine 47 has biased composition (polar residues). Composition is skewed to basic and acidic residues over residues lysine 81–leucine 95 and serine 104–glutamate 118. A bZIP domain is found at glutamate 87 to leucine 150. Residues arginine 89–arginine 142 are basic motif. The leucine-zipper stretch occupies residues leucine 143–leucine 150. Disordered stretches follow at residues alanine 152 to threonine 175, proline 194 to glutamine 218, and serine 328 to alanine 350. Over residues serine 160–threonine 175 the composition is skewed to low complexity. Composition is skewed to polar residues over residues proline 196–alanine 211 and leucine 329–cysteine 340.

This sequence belongs to the bZIP family. In terms of assembly, homodimer.

The protein resides in the nucleus. Functionally, transcriptional activator involved in the unfolded protein response (UPR) pathway. Recognizes and binds to the UPR element (UPRE) in the promoter of UPR-regulated genes. Increases the synthesis of endoplasmic reticulum-resident proteins required for protein folding as well as components of the secretory pathway. This is Transcriptional activator hacA (hacA) from Emericella nidulans (strain FGSC A4 / ATCC 38163 / CBS 112.46 / NRRL 194 / M139) (Aspergillus nidulans).